We begin with the raw amino-acid sequence, 586 residues long: Lamin-B1 (586 aa).

A disordered region spans residues 1–31 (MATATPVPPRMGSRAGGPTTPLSPTRLSRLQ). Ala2 carries the N-acetylalanine modification. Positions 2–34 (ATATPVPPRMGSRAGGPTTPLSPTRLSRLQEKE) are head. Phosphothreonine is present on residues Thr3 and Thr5. Residue Arg14 is modified to Omega-N-methylarginine. Thr20 is subject to Phosphothreonine. Position 23 is a phosphoserine (Ser23). Thr25 carries the post-translational modification Phosphothreonine. Ser28 is modified (phosphoserine). An IF rod domain is found at 32-388 (EKEELRELND…KLLEGEEERL (357 aa)). The interval 35-69 (ELRELNDRLAVYIDKVRSLETENSALQLQVTEREE) is coil 1A. Positions 70-81 (VRGRELTGLKAL) are linker 1. Residues 82–215 (YETELADARR…EFRKSMYEEE (134 aa)) are coil 1B. Lys102 is covalently cross-linked (Glycyl lysine isopeptide (Lys-Gly) (interchain with G-Cter in SUMO2)). Lys111 bears the N6-acetyllysine mark. Residue Lys123 forms a Glycyl lysine isopeptide (Lys-Gly) (interchain with G-Cter in SUMO2) linkage. Position 126 is a phosphoserine (Ser126). Lys145 is covalently cross-linked (Glycyl lysine isopeptide (Lys-Gly) (interchain with G-Cter in SUMO2)). Lys157 carries the post-translational modification N6-acetyllysine; alternate. Residue Lys157 forms a Glycyl lysine isopeptide (Lys-Gly) (interchain with G-Cter in SUMO2); alternate linkage. Ser158 carries the post-translational modification Phosphoserine. Lys181 is covalently cross-linked (Glycyl lysine isopeptide (Lys-Gly) (interchain with G-Cter in SUMO2)). Phosphoserine is present on residues Ser200, Ser210, and Ser232. A linker 2 region spans residues 216-243 (INETRRKHETRLVEVDSGRQIEYEYKLA). Glycyl lysine isopeptide (Lys-Gly) (interchain with G-Cter in SUMO2) cross-links involve residues Lys241 and Lys261. The interval 244–386 (QALHEMREQH…YRKLLEGEEE (143 aa)) is coil 2. Lys271 bears the N6-acetyllysine; alternate mark. Lys271 is covalently cross-linked (Glycyl lysine isopeptide (Lys-Gly) (interchain with G-Cter in SUMO2); alternate). Phosphoserine is present on residues Ser278 and Ser302. A Glycyl lysine isopeptide (Lys-Gly) (interchain with G-Cter in SUMO2) cross-link involves residue Lys312. Lys330 carries the N6-acetyllysine; alternate modification. Residue Lys330 forms a Glycyl lysine isopeptide (Lys-Gly) (interchain with G-Cter in SUMO2); alternate linkage. Phosphoserine is present on residues Ser375 and Ser393. Positions 387–586 (RLKLSPSPSS…RASNRSCAIM (200 aa)) are tail. The interval 388–432 (LKLSPSPSSRVTVSRASSSRSVRTTRGKRKRVDVEESEASSSVSI) is disordered. Residues 390 to 409 (LSPSPSSRVTVSRASSSRSV) show a composition bias toward low complexity. Thr399 is a glycosylation site (O-linked (GlcNAc) threonine). The residue at position 413 (Arg413) is an Omega-N-methylarginine. The Nuclear localization signal motif lies at 415–420 (KRKRVD). Positions 430 to 546 (VSISHSASAT…EEVAQRSTVF (117 aa)) constitute an LTD domain. The residue at position 483 (Lys483) is an N6-acetyllysine. Residue Lys532 forms a Glycyl lysine isopeptide (Lys-Gly) (interchain with G-Cter in SUMO2) linkage. Ser534 bears the Phosphoserine mark. A Glycyl lysine isopeptide (Lys-Gly) (interchain with G-Cter in SUMO2) cross-link involves residue Lys547. Thr575 carries the post-translational modification Phosphothreonine. A Cysteine methyl ester modification is found at Cys583. A lipid anchor (S-farnesyl cysteine) is attached at Cys583. Residues 584–586 (AIM) constitute a propeptide, removed in mature form.

It belongs to the intermediate filament family. Homodimer. Lamin dimers then assemble into dimeric head-to-tail polymers. Ultimately, two head-to-tail polymers assemble laterally into a protofilament with a uniformly shaped rod of 3.5 nm in diameter. Interacts with SPAG4 and SEPT12. Post-translationally, B-type lamins undergo a series of modifications, such as farnesylation and phosphorylation. Increased phosphorylation of the lamins occurs before envelope disintegration and probably plays a role in regulating lamin associations. In terms of processing, phosphorylation plays a key role in lamin organization, subcellular localization and nuclear envelope disintegration. Phosphorylation by CDK1 at Ser-23 and Ser-393 at the onset of mitosis drives lamin disassembly and nuclear envelope breakdown.

Its subcellular location is the nucleus lamina. In terms of biological role, lamins are intermediate filament proteins that assemble into a filamentous meshwork, and which constitute the major components of the nuclear lamina, a fibrous layer on the nucleoplasmic side of the inner nuclear membrane. Lamins provide a framework for the nuclear envelope, bridging the nuclear envelope and chromatin, thereby playing an important role in nuclear assembly, chromatin organization, nuclear membrane and telomere dynamics. The structural integrity of the lamina is strictly controlled by the cell cycle, as seen by the disintegration and formation of the nuclear envelope in prophase and telophase, respectively. This chain is Lamin-B1 (LMNB1), found in Homo sapiens (Human).